Reading from the N-terminus, the 29-residue chain is Cyclotide cter-N (29 aa).

Positions Gly-1–Asn-29 form a cross-link, cyclopeptide (Gly-Asn). Intrachain disulfides connect Cys-5–Cys-19, Cys-9–Cys-21, and Cys-14–Cys-26.

Post-translationally, this is a cyclic peptide.

Its subcellular location is the secreted. Functionally, probably participates in a plant defense mechanism. The protein is Cyclotide cter-N of Clitoria ternatea (Butterfly pea).